Here is a 290-residue protein sequence, read N- to C-terminus: DegV domain-containing protein MG450 (290 aa).

The DegV domain occupies 3 to 289; that stretch reads IAFLVDSVSN…INSYAFLIQT (287 aa). Threonine 65 and serine 97 together coordinate hexadecanoate.

In terms of biological role, may bind long-chain fatty acids, such as palmitate, and may play a role in lipid transport or fatty acid metabolism. This Mycoplasma genitalium (strain ATCC 33530 / DSM 19775 / NCTC 10195 / G37) (Mycoplasmoides genitalium) protein is DegV domain-containing protein MG450.